The primary structure comprises 368 residues: Anti-sigma-X factor RsiX (368 aa).

Over residues Gln73–Lys87 the composition is skewed to polar residues. The tract at residues Gln73–Asp101 is disordered.

It localises to the cell membrane. Functionally, the anti-sigma factor for extracytoplasmic function (ECF) sigma factor SigX, inhibits SigX activity and stabilizes it. This Bacillus subtilis (strain 168) protein is Anti-sigma-X factor RsiX (rsiX).